The following is a 274-amino-acid chain: Penicillin-insensitive murein endopeptidase (274 aa).

The first 19 residues, Met1 to Ala19, serve as a signal peptide directing secretion. Intrachain disulfides connect Cys44–Cys265, Cys187–Cys235, and Cys216–Cys223. 6 residues coordinate Zn(2+): His110, His113, Asp120, Asp147, His150, and His211. Residues Asp225–Leu274 are disordered.

This sequence belongs to the peptidase M74 family. Dimer. Zn(2+) is required as a cofactor.

The protein resides in the periplasm. Its function is as follows. Murein endopeptidase that cleaves the D-alanyl-meso-2,6-diamino-pimelyl amide bond that connects peptidoglycan strands. Likely plays a role in the removal of murein from the sacculus. This Salmonella arizonae (strain ATCC BAA-731 / CDC346-86 / RSK2980) protein is Penicillin-insensitive murein endopeptidase.